The following is a 471-amino-acid chain: Cysteine--tRNA ligase (471 aa).

Residue C29 coordinates Zn(2+). Residues 31-41 (PTVYNYIHIGN) carry the 'HIGH' region motif. Residues C209, H234, and E238 each coordinate Zn(2+). Residues 266–270 (KMSKS) carry the 'KMSKS' region motif. An ATP-binding site is contributed by K269.

It belongs to the class-I aminoacyl-tRNA synthetase family. Monomer. Zn(2+) serves as cofactor.

The protein localises to the cytoplasm. The catalysed reaction is tRNA(Cys) + L-cysteine + ATP = L-cysteinyl-tRNA(Cys) + AMP + diphosphate. The protein is Cysteine--tRNA ligase of Listeria monocytogenes serotype 4b (strain CLIP80459).